Consider the following 327-residue polypeptide: Ferrochelatase 2 (327 aa).

H201 and E282 together coordinate Fe cation.

It belongs to the ferrochelatase family.

The protein localises to the cytoplasm. It carries out the reaction heme b + 2 H(+) = protoporphyrin IX + Fe(2+). Its pathway is porphyrin-containing compound metabolism; protoheme biosynthesis; protoheme from protoporphyrin-IX: step 1/1. Functionally, catalyzes the ferrous insertion into protoporphyrin IX. The sequence is that of Ferrochelatase 2 from Shewanella oneidensis (strain ATCC 700550 / JCM 31522 / CIP 106686 / LMG 19005 / NCIMB 14063 / MR-1).